The following is a 117-amino-acid chain: Large ribosomal subunit protein uL18 (117 aa).

Over residues 1–17 (MNLSRNKARKVKQKRLR) the composition is skewed to basic residues. Residues 1–23 (MNLSRNKARKVKQKRLRAKSELS) form a disordered region.

It belongs to the universal ribosomal protein uL18 family. Part of the 50S ribosomal subunit; part of the 5S rRNA/L5/L18/L25 subcomplex. Contacts the 5S and 23S rRNAs.

This is one of the proteins that bind and probably mediate the attachment of the 5S RNA into the large ribosomal subunit, where it forms part of the central protuberance. This chain is Large ribosomal subunit protein uL18, found in Mycoplasmopsis synoviae (strain 53) (Mycoplasma synoviae).